A 125-amino-acid polypeptide reads, in one-letter code: uncharacterized protein (125 aa).

Positions 19–73 (IYSLRLAKGLSRQQLAEVIDVTHQQLQKYEKAINRISVGRLVLIAEALDRNIDYF) constitute an HTH cro/C1-type domain. Positions 30–49 (RQQLAEVIDVTHQQLQKYEK) form a DNA-binding region, H-T-H motif.

This is an uncharacterized protein from Rickettsia conorii (strain ATCC VR-613 / Malish 7).